Reading from the N-terminus, the 290-residue chain is Xyloglucan endotransglycosylase/hydrolase protein 8 (290 aa).

An N-terminal signal peptide occupies residues 1 to 25; sequence MAKHLALSVAAAVAVSWLAASSAAA. Residues 26–218 form the GH16 domain; sequence AGFYEKFDVV…WSGAPFVVSY (193 aa). Residue Glu-106 is the Nucleophile of the active site. Glu-110 functions as the Proton donor in the catalytic mechanism. Position 110 (Glu-110) interacts with xyloglucan. Asn-114 is a glycosylation site (N-linked (GlcNAc...) asparagine). Residues 123-125, 133-135, and 197-198 contribute to the xyloglucan site; these read NTN, KKE, and YW. 2 disulfides stabilise this stretch: Cys-226–Cys-240 and Cys-273–Cys-287. Arg-278 is a binding site for xyloglucan.

Belongs to the glycosyl hydrolase 16 family. XTH group 2 subfamily. In terms of processing, contains at least one intrachain disulfide bond essential for its enzymatic activity. As to expression, transcript strongly detected in leaf sheaths. Weakly or not expressed in leaf blades, roots and calli. Accumulation of transcript detected in shoot apex meristem, vascular tissues, young leaves, vascular bundles of leaf sheaths, and peripheral cylinder of the vascular bundles and fibers in the nodal region.

The protein localises to the secreted. It is found in the cell wall. Its subcellular location is the extracellular space. The protein resides in the apoplast. The enzyme catalyses breaks a beta-(1-&gt;4) bond in the backbone of a xyloglucan and transfers the xyloglucanyl segment on to O-4 of the non-reducing terminal glucose residue of an acceptor, which can be a xyloglucan or an oligosaccharide of xyloglucan.. Its function is as follows. Catalyzes xyloglucan endohydrolysis (XEH) and/or endotransglycosylation (XET). Cleaves and religates xyloglucan polymers, an essential constituent of the primary cell wall, and thereby participates in cell wall construction of growing tissues. May promote elongation of three internodes (II, III and IV) and may be involved in cell elongation processes. This chain is Xyloglucan endotransglycosylase/hydrolase protein 8 (XTH8), found in Oryza sativa subsp. japonica (Rice).